We begin with the raw amino-acid sequence, 158 residues long: Small ribosomal subunit protein uS9 (158 aa).

The protein belongs to the universal ribosomal protein uS9 family.

The polypeptide is Small ribosomal subunit protein uS9 (Brucella abortus (strain S19)).